Reading from the N-terminus, the 332-residue chain is tRNA(Ile)-lysidine synthase (332 aa).

39-44 (SGGADS) lines the ATP pocket.

It belongs to the tRNA(Ile)-lysidine synthase family.

Its subcellular location is the cytoplasm. The catalysed reaction is cytidine(34) in tRNA(Ile2) + L-lysine + ATP = lysidine(34) in tRNA(Ile2) + AMP + diphosphate + H(+). Functionally, ligates lysine onto the cytidine present at position 34 of the AUA codon-specific tRNA(Ile) that contains the anticodon CAU, in an ATP-dependent manner. Cytidine is converted to lysidine, thus changing the amino acid specificity of the tRNA from methionine to isoleucine. The chain is tRNA(Ile)-lysidine synthase from Leifsonia xyli subsp. xyli (strain CTCB07).